A 750-amino-acid polypeptide reads, in one-letter code: Methylmalonyl-CoA mutase, mitochondrial (750 aa).

The N-terminal 32 residues, 1-32, are a transit peptide targeting the mitochondrion; that stretch reads MLRVKNQLFLLSPHYLKQVKESSGSRLIRQRF. Q50 contacts malonyl-CoA. The residue at position 89 (K89) is an N6-acetyllysine. Malonyl-CoA is bound by residues 96–99 and 106–110; these read YPTM and TIRQY. The residue at position 212 (K212) is an N6-acetyllysine. Malonyl-CoA is bound by residues 216–218, R228, K255, H265, and 304–306; these read TIQ and RLS. At K335 the chain carries N6-acetyllysine. K343 is modified (N6-succinyllysine). Position 481 is a phosphoserine (S481). K595 carries the N6-succinyllysine modification. N6-acetyllysine is present on K602. Positions 614-746 constitute a B12-binding domain; that stretch reads RPRLLVAKMG…DDIEKCLEKK (133 aa). H627 contacts adenosylcob(III)alamin.

This sequence belongs to the methylmalonyl-CoA mutase family. In terms of assembly, homodimer. Interacts (the apoenzyme form) with MMAA; the interaction is GTP dependent. Requires adenosylcob(III)alamin as cofactor.

It localises to the mitochondrion matrix. The protein localises to the mitochondrion. The protein resides in the cytoplasm. The catalysed reaction is (R)-methylmalonyl-CoA = succinyl-CoA. With respect to regulation, inhibited by itaconyl-CoA, a metabolite that inactivates the coenzyme B12 cofactor. Catalyzes the reversible isomerization of methylmalonyl-CoA (MMCoA) (generated from branched-chain amino acid metabolism and degradation of dietary odd chain fatty acids and cholesterol) to succinyl-CoA (3-carboxypropionyl-CoA), a key intermediate of the tricarboxylic acid cycle. The protein is Methylmalonyl-CoA mutase, mitochondrial (MMUT) of Macaca fascicularis (Crab-eating macaque).